A 158-amino-acid chain; its full sequence is MFDVLVYLYETYYRPDACPDSEALVKKLSAVGFEEEEITKALGWLTALAETTNELSDSYPHQTAFSFGTRIYVSQETDVLGTPAVGFIQFLEAAKLINPIQREIVIERALAAGETPISLEKLKVIVLMVLWSQGKEPDGLIFDELFLDDDDAAPRILH.

This sequence belongs to the Smg family.

The sequence is that of Protein Smg homolog from Herminiimonas arsenicoxydans.